The chain runs to 240 residues: Transcriptional regulatory protein rxt2 (240 aa).

This sequence belongs to the RXT2 family. As to quaternary structure, component of the RPD3C(L) complex.

The protein resides in the nucleus. In terms of biological role, component of the RPD3C(L) histone deacetylase complex (HDAC) responsible for the deacetylation of lysine residues on the N-terminal part of the core histones (H2A, H2B, H3 and H4). Histone deacetylation gives a tag for epigenetic repression and plays an important role in transcriptional regulation, cell cycle progression and developmental events. The polypeptide is Transcriptional regulatory protein rxt2 (rtx2) (Schizosaccharomyces pombe (strain 972 / ATCC 24843) (Fission yeast)).